Consider the following 530-residue polypeptide: MGSTATETEELENTTFKYLIGEQTEKMWQRLKGILRCLVKQLEKGDVNVIDLKKNIEYAASVLEAVYIDETRRLLDTDDELSDIQSDSVPSEVRDWLASTFTRKMGMMKKKSEEKPRFRSIVHVVQAGIFVERMYRKSYHMVGLAYPEAVIVTLKDVDKWSFDVFALNEASGEHSLKFMIYELFTRYDLINRFKIPVSCLIAFAEALEVGYSKYKNPYHNLIHAADVTQTVHYIMLHTGIMHWLTELEILAMVFAAAIHDYEHTGTTNNFHIQTRSDVAILYNDRSVLENHHVSAAYRLMQEEEMNVLINLSKDDWRDLRNLVIEMVLSTDMSGHFQQIKNIRNSLQQPEGLDKAKTMSLILHAADISHPAKSWKLHHRWTMALMEEFFLQGDKEAELGLPFSPLCDRKSTMVAQSQIGFIDFIVEPTFSLLTDSTEKIIIPLIEEDSKTKTPSYGASRRSNMKGTTNDGTYSPDYSLASVDLKSFKNSLVDIIQQNKERWKELAAQGEPDPHKNSDLVNAEEKHAETHS.

Calmodulin-binding regions lie at residues 24-44 (TEKM…QLEK) and 114-137 (EKPR…MYRK). In terms of domain architecture, PDEase spans 142–508 (VGLAYPEAVI…ERWKELAAQG (367 aa)). Catalysis depends on His-219, which acts as the Proton donor. 4 residues coordinate Zn(2+): His-223, His-259, Asp-260, and Asp-366. Asp-260 lines the Mg(2+) pocket. Disordered stretches follow at residues 450–471 (TKTP…NDGT) and 502–530 (KELA…ETHS). The span at 451-471 (KTPSYGASRRSNMKGTTNDGT) shows a compositional bias: polar residues. Positions 510–530 (PDPHKNSDLVNAEEKHAETHS) are enriched in basic and acidic residues.

Belongs to the cyclic nucleotide phosphodiesterase family. PDE1 subfamily. As to quaternary structure, homodimer. Interacts with YWHAZ. The cofactor is Zn(2+). Requires Mg(2+) as cofactor.

The catalysed reaction is a nucleoside 3',5'-cyclic phosphate + H2O = a nucleoside 5'-phosphate + H(+). It catalyses the reaction 3',5'-cyclic GMP + H2O = GMP + H(+). The enzyme catalyses 3',5'-cyclic AMP + H2O = AMP + H(+). Type I PDE are activated by the binding of calmodulin in the presence of Ca(2+). In terms of biological role, calcium/calmodulin-dependent cyclic nucleotide phosphodiesterase with a dual specificity for the second messengers cGMP and cAMP, which are key regulators of many important physiological processes. Has a higher efficiency with cGMP compared to cAMP. This is Dual specificity calcium/calmodulin-dependent 3',5'-cyclic nucleotide phosphodiesterase 1A from Bos taurus (Bovine).